A 388-amino-acid chain; its full sequence is Mannitol-1-phosphate 5-dehydrogenase (388 aa).

NAD(+) is bound at residue 5–16 (AIQFGGGNIGRG). The active site involves Lys213.

It belongs to the mannitol dehydrogenase family. In terms of assembly, monomer.

The enzyme catalyses D-mannitol 1-phosphate + NAD(+) = beta-D-fructose 6-phosphate + NADH + H(+). Functionally, catalyzes the NAD(H)-dependent interconversion of D-fructose 6-phosphate and D-mannitol 1-phosphate in the metabolism of mannitol. Has a strong preference for NADH over NADPH. The sequence is that of Mannitol-1-phosphate 5-dehydrogenase (mpdA) from Aspergillus niger (strain ATCC MYA-4892 / CBS 513.88 / FGSC A1513).